Reading from the N-terminus, the 290-residue chain is Acetyl-coenzyme A carboxylase carboxyl transferase subunit beta (290 aa).

The 263-residue stretch at 28–290 folds into the CoA carboxyltransferase N-terminal domain; it reads IMTKCPKCKK…SRGGDEWHTN (263 aa). 4 residues coordinate Zn(2+): Cys32, Cys35, Cys51, and Cys54. The C4-type zinc-finger motif lies at 32–54; sequence CPKCKKIMYTKELVKNLRVCISC.

This sequence belongs to the AccD/PCCB family. As to quaternary structure, acetyl-CoA carboxylase is a heterohexamer composed of biotin carboxyl carrier protein (AccB), biotin carboxylase (AccC) and two subunits each of ACCase subunit alpha (AccA) and ACCase subunit beta (AccD). Requires Zn(2+) as cofactor.

It localises to the cytoplasm. It catalyses the reaction N(6)-carboxybiotinyl-L-lysyl-[protein] + acetyl-CoA = N(6)-biotinyl-L-lysyl-[protein] + malonyl-CoA. The protein operates within lipid metabolism; malonyl-CoA biosynthesis; malonyl-CoA from acetyl-CoA: step 1/1. Its function is as follows. Component of the acetyl coenzyme A carboxylase (ACC) complex. Biotin carboxylase (BC) catalyzes the carboxylation of biotin on its carrier protein (BCCP) and then the CO(2) group is transferred by the transcarboxylase to acetyl-CoA to form malonyl-CoA. The sequence is that of Acetyl-coenzyme A carboxylase carboxyl transferase subunit beta from Anoxybacillus flavithermus (strain DSM 21510 / WK1).